Here is a 75-residue protein sequence, read N- to C-terminus: MARFYRRRKFCRFTAENVAYIDYKDIDTLKQYITENGKIVPSRITGTKARYQRQLALAIKQARYLALIPYTDNHK.

This sequence belongs to the bacterial ribosomal protein bS18 family. Part of the 30S ribosomal subunit. Forms a tight heterodimer with protein bS6.

Its function is as follows. Binds as a heterodimer with protein bS6 to the central domain of the 16S rRNA, where it helps stabilize the platform of the 30S subunit. This chain is Small ribosomal subunit protein bS18, found in Acinetobacter baylyi (strain ATCC 33305 / BD413 / ADP1).